Consider the following 363-residue polypeptide: tRNA/tmRNA (uracil-C(5))-methyltransferase (363 aa).

The S-adenosyl-L-methionine site is built by Q187, Y215, N220, E236, and D296. Catalysis depends on C321, which acts as the Nucleophile. The Proton acceptor role is filled by E355.

It belongs to the class I-like SAM-binding methyltransferase superfamily. RNA M5U methyltransferase family. TrmA subfamily.

It carries out the reaction uridine(54) in tRNA + S-adenosyl-L-methionine = 5-methyluridine(54) in tRNA + S-adenosyl-L-homocysteine + H(+). It catalyses the reaction uridine(341) in tmRNA + S-adenosyl-L-methionine = 5-methyluridine(341) in tmRNA + S-adenosyl-L-homocysteine + H(+). In terms of biological role, dual-specificity methyltransferase that catalyzes the formation of 5-methyluridine at position 54 (m5U54) in all tRNAs, and that of position 341 (m5U341) in tmRNA (transfer-mRNA). The sequence is that of tRNA/tmRNA (uracil-C(5))-methyltransferase from Pseudomonas aeruginosa (strain UCBPP-PA14).